Reading from the N-terminus, the 214-residue chain is Adenylate kinase (214 aa).

Residue 10–15 (GAGKGT) participates in ATP binding. The tract at residues 30–59 (STGDMLRAAIKAGSELGNKAKAVMDAGQLV) is NMP. AMP is bound by residues T31, R36, 57–59 (QLV), 85–88 (GFPR), and Q92. The interval 122–159 (GRRVHSGSGRVYHLVYNPPKVEGKDDVSGDDLSIRPDD) is LID. Residues R123 and 132-133 (VY) contribute to the ATP site. AMP-binding residues include R156 and R167. Residue Q200 coordinates ATP.

It belongs to the adenylate kinase family. Monomer.

Its subcellular location is the cytoplasm. The enzyme catalyses AMP + ATP = 2 ADP. It participates in purine metabolism; AMP biosynthesis via salvage pathway; AMP from ADP: step 1/1. Catalyzes the reversible transfer of the terminal phosphate group between ATP and AMP. Plays an important role in cellular energy homeostasis and in adenine nucleotide metabolism. The sequence is that of Adenylate kinase from Colwellia psychrerythraea (strain 34H / ATCC BAA-681) (Vibrio psychroerythus).